The following is a 499-amino-acid chain: Apolipoprotein N-acyltransferase (499 aa).

6 helical membrane-spanning segments follow: residues 18–38 (FSPY…LIIT), 50–70 (LGFL…YISI), 82–102 (IIII…FVIL), 105–125 (FFFP…AWMI), 156–176 (PIIG…MCVL), and 182–202 (SYYP…LNFF). Positions 217-461 (IQGNISQHTY…NDFLLEEVFS (245 aa)) constitute a CN hydrolase domain. The active-site Proton acceptor is E257. K320 is an active-site residue. The active-site Nucleophile is the C372. Residues 476-496 (LLFFSIICFIISFFIKIKLIF) form a helical membrane-spanning segment.

It belongs to the CN hydrolase family. Apolipoprotein N-acyltransferase subfamily.

Its subcellular location is the cell membrane. It catalyses the reaction N-terminal S-1,2-diacyl-sn-glyceryl-L-cysteinyl-[lipoprotein] + a glycerophospholipid = N-acyl-S-1,2-diacyl-sn-glyceryl-L-cysteinyl-[lipoprotein] + a 2-acyl-sn-glycero-3-phospholipid + H(+). The protein operates within protein modification; lipoprotein biosynthesis (N-acyl transfer). Functionally, catalyzes the phospholipid dependent N-acylation of the N-terminal cysteine of apolipoprotein, the last step in lipoprotein maturation. This Wigglesworthia glossinidia brevipalpis protein is Apolipoprotein N-acyltransferase.